A 127-amino-acid chain; its full sequence is Large ribosomal subunit protein bL20 (127 aa).

Belongs to the bacterial ribosomal protein bL20 family.

In terms of biological role, binds directly to 23S ribosomal RNA and is necessary for the in vitro assembly process of the 50S ribosomal subunit. It is not involved in the protein synthesizing functions of that subunit. The protein is Large ribosomal subunit protein bL20 of Renibacterium salmoninarum (strain ATCC 33209 / DSM 20767 / JCM 11484 / NBRC 15589 / NCIMB 2235).